The sequence spans 270 residues: Interleukin-2 receptor subunit alpha (270 aa).

An N-terminal signal peptide occupies residues 1-21; that stretch reads MEPSLLMWGFFTFTMIPGCMA. The Sushi 1 domain occupies 22-84; the sequence is GACVQQPPSL…FWENKCQCMP (63 aa). Residues 22–245 are Extracellular-facing; that stretch reads GACVQQPPSL…QPIIFTTQYQ (224 aa). Intrachain disulfides connect cysteine 24/cysteine 67, cysteine 49/cysteine 80, and cysteine 51/cysteine 82. N-linked (GlcNAc...) asparagine glycosylation is found at asparagine 33 and asparagine 70. Positions 87–124 are disordered; the sequence is SPRIPVKQVTPRPEEQKERKTTETQGQMQPPNQANLPG. Residues 98–108 are compositionally biased toward basic and acidic residues; it reads RPEEQKERKTT. Over residues 112–121 the composition is skewed to polar residues; sequence GQMQPPNQAN. The Sushi 2 domain occupies 124–191; sequence GHCKEPPPWE…WTQPKLKCKS (68 aa). Disulfide bonds link cysteine 126/cysteine 171 and cysteine 153/cysteine 189. Residues asparagine 164 and asparagine 195 are each glycosylated (N-linked (GlcNAc...) asparagine). A disordered region spans residues 190–225; the sequence is KSEKENGSFPEPQMSTAAPPTTKTSLPTRTKGTTDS. A compositionally biased stretch (polar residues) spans 202–225; it reads QMSTAAPPTTKTSLPTRTKGTTDS. Asparagine 227 carries N-linked (GlcNAc...) asparagine glycosylation. The helical transmembrane segment at 246 to 264 threads the bilayer; the sequence is LAVAGCVLLLLSILLLSGL. Residues 265-270 lie on the Cytoplasmic side of the membrane; sequence TWQRRR.

In terms of assembly, non-covalent dimer of an alpha and a beta subunit. IL2R exists in 3 different forms: a high affinity dimer, an intermediate affinity monomer (beta subunit), and a low affinity monomer (alpha subunit). The high and intermediate affinity forms also associate with a gamma subunit.

The protein localises to the membrane. Receptor for interleukin-2. The receptor is involved in the regulation of immune tolerance by controlling regulatory T cells (TREGs) activity. TREGs suppress the activation and expansion of autoreactive T-cells. The protein is Interleukin-2 receptor subunit alpha (IL2RA) of Sus scrofa (Pig).